Consider the following 498-residue polypeptide: Glycerol kinase (498 aa).

Thr12 is a binding site for ADP. The ATP site is built by Thr12, Thr13, and Ser14. Thr12 is a binding site for sn-glycerol 3-phosphate. Residue Arg16 coordinates ADP. Residues Arg82, Glu83, Tyr134, and Asp244 each coordinate sn-glycerol 3-phosphate. The glycerol site is built by Arg82, Glu83, Tyr134, Asp244, and Gln245. The ADP site is built by Thr266 and Gly310. ATP contacts are provided by Thr266, Gly310, Gln314, and Gly411. ADP-binding residues include Gly411 and Asn415.

It belongs to the FGGY kinase family.

The enzyme catalyses glycerol + ATP = sn-glycerol 3-phosphate + ADP + H(+). The protein operates within polyol metabolism; glycerol degradation via glycerol kinase pathway; sn-glycerol 3-phosphate from glycerol: step 1/1. With respect to regulation, inhibited by fructose 1,6-bisphosphate (FBP). Functionally, key enzyme in the regulation of glycerol uptake and metabolism. Catalyzes the phosphorylation of glycerol to yield sn-glycerol 3-phosphate. The chain is Glycerol kinase from Chloroflexus aggregans (strain MD-66 / DSM 9485).